A 339-amino-acid polypeptide reads, in one-letter code: Fructose-1,6-bisphosphatase isozyme 2 (339 aa).

The important for interaction with ALDOA stretch occupies residues 3-10 (DRSPFETD). AMP is bound by residues Val18 and 28-32 (TGELT). Positions 69 and 98 each coordinate Mg(2+). 113 to 114 (KY) serves as a coordination point for AMP. Positions 119, 121, and 122 each coordinate Mg(2+). Asp122 is a substrate binding site. Arg141 is a binding site for AMP. Positions 204–208 (KKKGK) match the Nuclear localization signal motif. 213-216 (NEGY) contacts substrate. A phosphotyrosine mark is found at Tyr216 and Tyr219. Substrate is bound by residues 245–249 (YVGSM), Tyr265, and Lys275. Glu281 provides a ligand contact to Mg(2+).

This sequence belongs to the FBPase class 1 family. As to quaternary structure, homotetramer. Interacts with ALDOA; the interaction blocks inhibition by physiological concentrations of AMP and reduces inhibition by Ca(2+). Interacts with alpha-actinin and F-actin. Mg(2+) is required as a cofactor. As to expression, expressed in muscle, intestine, brain and placenta and very weakly in liver.

It localises to the cell junction. The protein resides in the cytoplasm. The protein localises to the nucleus. Its subcellular location is the myofibril. It is found in the sarcomere. It localises to the z line. It catalyses the reaction beta-D-fructose 1,6-bisphosphate + H2O = beta-D-fructose 6-phosphate + phosphate. It functions in the pathway carbohydrate biosynthesis; gluconeogenesis. Its activity is regulated as follows. Subject to complex allosteric regulation. The enzyme can assume an active R-state, or an inactive T-state. Intermediate conformations may exist. AMP acts as an allosteric inhibitor. Fructose 2,6-bisphosphate acts as a competitive inhibitor. Strongly inhibited by Ca(2+). Its function is as follows. Catalyzes the hydrolysis of fructose 1,6-bisphosphate to fructose 6-phosphate in the presence of divalent cations and probably participates in glycogen synthesis from carbohydrate precursors, such as lactate. The sequence is that of Fructose-1,6-bisphosphatase isozyme 2 (Fbp2) from Mus musculus (Mouse).